A 66-amino-acid chain; its full sequence is Stress-associated endoplasmic reticulum protein 1 (66 aa).

A disordered region spans residues 1–31 (MVAKQRIRMANEKHSKNITQRGNVAKTSRNA). Over residues 17–30 (NITQRGNVAKTSRN) the composition is skewed to polar residues. The chain crosses the membrane as a helical span at residues 39–59 (GPWLLALFIFVVCGSAIFQII).

It belongs to the RAMP4 family. As to quaternary structure, interacts with SEC61B, SEC61A1 and the SEC61 complex. Interacts with CANX.

It localises to the membrane. It is found in the endoplasmic reticulum membrane. Interacts with target proteins during their translocation into the lumen of the endoplasmic reticulum. Protects unfolded target proteins against degradation during ER stress. May facilitate glycosylation of target proteins after termination of ER stress. May modulate the use of N-glycosylation sites on target proteins. This chain is Stress-associated endoplasmic reticulum protein 1 (SERP1), found in Bos taurus (Bovine).